The following is a 129-amino-acid chain: Small ribosomal subunit protein uS8 (129 aa).

The protein belongs to the universal ribosomal protein uS8 family. As to quaternary structure, part of the 30S ribosomal subunit.

Functionally, one of the primary rRNA binding proteins, it binds directly to 16S rRNA central domain where it helps coordinate assembly of the platform of the 30S subunit. The chain is Small ribosomal subunit protein uS8 from Picrophilus torridus (strain ATCC 700027 / DSM 9790 / JCM 10055 / NBRC 100828 / KAW 2/3).